A 263-amino-acid chain; its full sequence is Hydroxyethylthiazole kinase (263 aa).

Methionine 41 lines the substrate pocket. The ATP site is built by arginine 117 and serine 163. A substrate-binding site is contributed by alanine 190.

Belongs to the Thz kinase family. Requires Mg(2+) as cofactor.

It carries out the reaction 5-(2-hydroxyethyl)-4-methylthiazole + ATP = 4-methyl-5-(2-phosphooxyethyl)-thiazole + ADP + H(+). It functions in the pathway cofactor biosynthesis; thiamine diphosphate biosynthesis; 4-methyl-5-(2-phosphoethyl)-thiazole from 5-(2-hydroxyethyl)-4-methylthiazole: step 1/1. Catalyzes the phosphorylation of the hydroxyl group of 4-methyl-5-beta-hydroxyethylthiazole (THZ). The polypeptide is Hydroxyethylthiazole kinase (Haemophilus influenzae (strain PittEE)).